The primary structure comprises 188 residues: UPF0200 protein YG5714_1176 (188 aa).

15-22 (GMPGSGKS) lines the ATP pocket.

It belongs to the UPF0200 family.

This is UPF0200 protein YG5714_1176 from Saccharolobus islandicus (strain Y.G.57.14 / Yellowstone #1) (Sulfolobus islandicus).